Reading from the N-terminus, the 196-residue chain is Peptidyl-tRNA hydrolase (196 aa).

His-15 is a binding site for tRNA. Residue His-20 is the Proton acceptor of the active site. Positions 66, 68, and 114 each coordinate tRNA.

Belongs to the PTH family. As to quaternary structure, monomer.

The protein resides in the cytoplasm. The enzyme catalyses an N-acyl-L-alpha-aminoacyl-tRNA + H2O = an N-acyl-L-amino acid + a tRNA + H(+). In terms of biological role, hydrolyzes ribosome-free peptidyl-tRNAs (with 1 or more amino acids incorporated), which drop off the ribosome during protein synthesis, or as a result of ribosome stalling. Catalyzes the release of premature peptidyl moieties from peptidyl-tRNA molecules trapped in stalled 50S ribosomal subunits, and thus maintains levels of free tRNAs and 50S ribosomes. This chain is Peptidyl-tRNA hydrolase, found in Polynucleobacter asymbioticus (strain DSM 18221 / CIP 109841 / QLW-P1DMWA-1) (Polynucleobacter necessarius subsp. asymbioticus).